Here is a 572-residue protein sequence, read N- to C-terminus: Proline--tRNA ligase (572 aa).

The protein belongs to the class-II aminoacyl-tRNA synthetase family. ProS type 1 subfamily. Homodimer.

Its subcellular location is the cytoplasm. It carries out the reaction tRNA(Pro) + L-proline + ATP = L-prolyl-tRNA(Pro) + AMP + diphosphate. Catalyzes the attachment of proline to tRNA(Pro) in a two-step reaction: proline is first activated by ATP to form Pro-AMP and then transferred to the acceptor end of tRNA(Pro). As ProRS can inadvertently accommodate and process non-cognate amino acids such as alanine and cysteine, to avoid such errors it has two additional distinct editing activities against alanine. One activity is designated as 'pretransfer' editing and involves the tRNA(Pro)-independent hydrolysis of activated Ala-AMP. The other activity is designated 'posttransfer' editing and involves deacylation of mischarged Ala-tRNA(Pro). The misacylated Cys-tRNA(Pro) is not edited by ProRS. This Yersinia pseudotuberculosis serotype O:1b (strain IP 31758) protein is Proline--tRNA ligase.